Here is a 210-residue protein sequence, read N- to C-terminus: Methylthioribulose-1-phosphate dehydratase (210 aa).

2 residues coordinate Zn(2+): His97 and His99.

The protein belongs to the aldolase class II family. MtnB subfamily. Homotetramer. Zn(2+) serves as cofactor.

It carries out the reaction 5-(methylsulfanyl)-D-ribulose 1-phosphate = 5-methylsulfanyl-2,3-dioxopentyl phosphate + H2O. The protein operates within amino-acid biosynthesis; L-methionine biosynthesis via salvage pathway; L-methionine from S-methyl-5-thio-alpha-D-ribose 1-phosphate: step 2/6. In terms of biological role, catalyzes the dehydration of methylthioribulose-1-phosphate (MTRu-1-P) into 2,3-diketo-5-methylthiopentyl-1-phosphate (DK-MTP-1-P). The protein is Methylthioribulose-1-phosphate dehydratase of Geobacillus kaustophilus (strain HTA426).